The following is a 279-amino-acid chain: Bifunctional protein FolD (279 aa).

Residues 165–167, S190, and I231 each bind NADP(+); that span reads GRS.

It belongs to the tetrahydrofolate dehydrogenase/cyclohydrolase family. Homodimer.

It carries out the reaction (6R)-5,10-methylene-5,6,7,8-tetrahydrofolate + NADP(+) = (6R)-5,10-methenyltetrahydrofolate + NADPH. The enzyme catalyses (6R)-5,10-methenyltetrahydrofolate + H2O = (6R)-10-formyltetrahydrofolate + H(+). It functions in the pathway one-carbon metabolism; tetrahydrofolate interconversion. In terms of biological role, catalyzes the oxidation of 5,10-methylenetetrahydrofolate to 5,10-methenyltetrahydrofolate and then the hydrolysis of 5,10-methenyltetrahydrofolate to 10-formyltetrahydrofolate. The chain is Bifunctional protein FolD from Halalkalibacterium halodurans (strain ATCC BAA-125 / DSM 18197 / FERM 7344 / JCM 9153 / C-125) (Bacillus halodurans).